The primary structure comprises 88 residues: Large ribosomal subunit protein bL31B (88 aa).

It belongs to the bacterial ribosomal protein bL31 family. Type B subfamily. Part of the 50S ribosomal subunit.

The chain is Large ribosomal subunit protein bL31B from Pasteurella multocida (strain Pm70).